The primary structure comprises 168 residues: Glycine-rich RNA-binding protein 2 (168 aa).

The 79-residue stretch at 8–86 (YRCFVGGLAW…RNITVNQAQS (79 aa)) folds into the RRM domain. Residues 148–168 (GYGGGGGYGGNRGDSGGNWRN) are disordered.

In terms of biological role, possibly has a role in RNA transcription or processing during stress. The sequence is that of Glycine-rich RNA-binding protein 2 (GRP2) from Sorghum bicolor (Sorghum).